The sequence spans 441 residues: tRNA(Ile)-lysidine synthase (441 aa).

27–32 (SGGVDS) contributes to the ATP binding site.

Belongs to the tRNA(Ile)-lysidine synthase family.

The protein localises to the cytoplasm. It catalyses the reaction cytidine(34) in tRNA(Ile2) + L-lysine + ATP = lysidine(34) in tRNA(Ile2) + AMP + diphosphate + H(+). Its function is as follows. Ligates lysine onto the cytidine present at position 34 of the AUA codon-specific tRNA(Ile) that contains the anticodon CAU, in an ATP-dependent manner. Cytidine is converted to lysidine, thus changing the amino acid specificity of the tRNA from methionine to isoleucine. The chain is tRNA(Ile)-lysidine synthase from Proteus mirabilis (strain HI4320).